Reading from the N-terminus, the 236-residue chain is Glucosamine-6-phosphate deaminase (236 aa).

The active-site Proton acceptor; for enolization step is D62. N128 functions as the For ring-opening step in the catalytic mechanism. Catalysis depends on H130, which acts as the Proton acceptor; for ring-opening step. The active-site For ring-opening step is the E135.

The protein belongs to the glucosamine/galactosamine-6-phosphate isomerase family. NagB subfamily.

It catalyses the reaction alpha-D-glucosamine 6-phosphate + H2O = beta-D-fructose 6-phosphate + NH4(+). The protein operates within amino-sugar metabolism; N-acetylneuraminate degradation; D-fructose 6-phosphate from N-acetylneuraminate: step 5/5. Catalyzes the reversible isomerization-deamination of glucosamine 6-phosphate (GlcN6P) to form fructose 6-phosphate (Fru6P) and ammonium ion. The chain is Glucosamine-6-phosphate deaminase from Lacticaseibacillus paracasei (strain ATCC 334 / BCRC 17002 / CCUG 31169 / CIP 107868 / KCTC 3260 / NRRL B-441) (Lactobacillus paracasei).